We begin with the raw amino-acid sequence, 286 residues long: Elongation factor Ts (286 aa).

Residues 82–85 (TDFV) are involved in Mg(2+) ion dislocation from EF-Tu.

The protein belongs to the EF-Ts family.

It localises to the cytoplasm. Associates with the EF-Tu.GDP complex and induces the exchange of GDP to GTP. It remains bound to the aminoacyl-tRNA.EF-Tu.GTP complex up to the GTP hydrolysis stage on the ribosome. This is Elongation factor Ts from Hahella chejuensis (strain KCTC 2396).